The following is a 201-amino-acid chain: NADH-quinone oxidoreductase subunit C (201 aa).

It belongs to the complex I 30 kDa subunit family. NDH-1 is composed of 14 different subunits. Subunits NuoB, C, D, E, F, and G constitute the peripheral sector of the complex.

The protein localises to the cell inner membrane. The enzyme catalyses a quinone + NADH + 5 H(+)(in) = a quinol + NAD(+) + 4 H(+)(out). Functionally, NDH-1 shuttles electrons from NADH, via FMN and iron-sulfur (Fe-S) centers, to quinones in the respiratory chain. The immediate electron acceptor for the enzyme in this species is believed to be ubiquinone. Couples the redox reaction to proton translocation (for every two electrons transferred, four hydrogen ions are translocated across the cytoplasmic membrane), and thus conserves the redox energy in a proton gradient. The polypeptide is NADH-quinone oxidoreductase subunit C (Dechloromonas aromatica (strain RCB)).